Here is a 471-residue protein sequence, read N- to C-terminus: Fructokinase-like 1, chloroplastic (471 aa).

Residues 1 to 38 (MASLLIFPHLHHFDSSLDRREVLVVRHSQASRRFLTPK) constitute a chloroplast transit peptide. Positions 36 to 85 (TPKASINGSGITNGAAAETTSKPSRKGRKKKQTSTVIEKDNTETDPELNP) are disordered. Residues 39–57 (ASINGSGITNGAAAETTSK) are compositionally biased toward polar residues. Positions 58 to 67 (PSRKGRKKKQ) are enriched in basic residues.

It belongs to the carbohydrate kinase PfkB family. Interacts with CITRX/TRXz. Interacts with PTAC7. Self-interacts. Binds to FLN2. Associates with the plastid-encoded RNA polymerase (PEP) complex.

It localises to the plastid. The protein resides in the chloroplast. In terms of biological role, required for proper chloroplast development, most likely through regulating plastid-encoded polymerase (PEP) dependent chloroplast transcription. Acts as a component of the transcriptionally active plastid chromosome that is required for plastid gene expression. The chain is Fructokinase-like 1, chloroplastic from Arabidopsis thaliana (Mouse-ear cress).